The following is a 992-amino-acid chain: Presequence protease, mitochondrial (992 aa).

The N-terminal 30 residues, 1–30 (MNYAKLSIAFSKKTIKTHNCRLFQRWLHVG), are a transit peptide targeting the mitochondrion. Position 91 (H91) interacts with Zn(2+). The active-site Proton acceptor is the E94. H95 is a Zn(2+) binding site. The active site involves E167. E192 contacts Zn(2+).

It belongs to the peptidase M16 family. PreP subfamily. Monomer and homodimer; homodimerization is induced by binding of the substrate. The cofactor is Zn(2+).

The protein resides in the mitochondrion intermembrane space. The protein localises to the mitochondrion matrix. Its function is as follows. Degrades mitochondrial transit peptides after their cleavage in the intermembrane space or in the matrix, and presequence peptides; clearance of these peptides is required to keep the presequence processing machinery running. Preferentially cleaves the N-terminal side of paired basic amino acid residues. Also degrades other unstructured peptides. May function as an ATP-dependent peptidase as opposed to a metalloendopeptidase. The polypeptide is Presequence protease, mitochondrial (cym1) (Schizosaccharomyces pombe (strain 972 / ATCC 24843) (Fission yeast)).